Consider the following 65-residue polypeptide: Large ribosomal subunit protein bL35 (65 aa).

Residues 1 to 22 (MPKIKTLRSAAKRFKKTASGKF) are disordered. Residues 10–22 (AAKRFKKTASGKF) show a composition bias toward basic residues.

It belongs to the bacterial ribosomal protein bL35 family.

The protein is Large ribosomal subunit protein bL35 of Buchnera aphidicola subsp. Schizaphis graminum (strain Sg).